Consider the following 433-residue polypeptide: UDP-N-acetylglucosamine 1-carboxyvinyltransferase (433 aa).

Residue 34–35 participates in phosphoenolpyruvate binding; sequence KN. Residue Arg-104 participates in UDP-N-acetyl-alpha-D-glucosamine binding. Catalysis depends on Cys-128, which acts as the Proton donor. Cys-128 carries the post-translational modification 2-(S-cysteinyl)pyruvic acid O-phosphothioketal. UDP-N-acetyl-alpha-D-glucosamine-binding residues include Asp-320 and Ile-342.

This sequence belongs to the EPSP synthase family. MurA subfamily.

It is found in the cytoplasm. It carries out the reaction phosphoenolpyruvate + UDP-N-acetyl-alpha-D-glucosamine = UDP-N-acetyl-3-O-(1-carboxyvinyl)-alpha-D-glucosamine + phosphate. Its pathway is cell wall biogenesis; peptidoglycan biosynthesis. Functionally, cell wall formation. Adds enolpyruvyl to UDP-N-acetylglucosamine. This chain is UDP-N-acetylglucosamine 1-carboxyvinyltransferase, found in Synechococcus sp. (strain CC9605).